The primary structure comprises 561 residues: MAKINFFAFGGQDERGKNCFVLEINNDVFIFNVGSLTPTTAVLGVKKIIPDFSWIQENQARIKGIFIGNPVTENIGSLEFLFHTVGFFPIYTSTIGAVVIKTKIHENKLNIPHDELEIHELKPLETVKIGHHNITPFKVSSSIPSSFGFALHTDDGYIVYVDDFIVLNDKNIAFENQLNQIIPQVANKTLLLITGVGLVGRNTGFTTPKHKSLEQLNRIIASAKGRVFAACYDSNAYSVMTLAQIARMQNRPFVIYSHSFVHLFNAIVRQKLFNNTHLNTISIEEINNSTNAIVVLTAPPDKLYAKLFKIGTNEDERVRYRKTDSFIFMIPRIAGYEELEAQILDDVARNEVSYYNLGREILSINASDEDMKFLVTSLKPKYIIPTSGLYRDFINFTMVMKQAGVEQSQVLIPFNGEVLAINHKQIDNKKRELKLNPKCVDSAGLQEIGASIMFERDQMSEAGVVTIIIYYDSKKSEFLNEITYSFLGVSLDSNNQVKLKTKMEELIRKQINDIKDFTTIKRRLGKDTSKELKVSIKRAVMNLFTKMTAKAPLILSTIISI.

The next 2 membrane-spanning stretches (helical) occupy residues 29 to 49 (FIFN…KKII) and 80 to 100 (FLFH…AVVI).

Its subcellular location is the cell membrane. This is an uncharacterized protein from Mycoplasma pneumoniae (strain ATCC 29342 / M129 / Subtype 1) (Mycoplasmoides pneumoniae).